The chain runs to 122 residues: Hexon-interlacing protein (122 aa).

Residues 72–106 (VTELNESIDELQQKMTELEKRLKIMEEKIEEIKLA) adopt a coiled-coil conformation.

This sequence belongs to the adenoviridae hexon-interlacing protein family. Homotrimer. Interacts with hexon protein; this interaction tethers the hexons together. Self-interacts with adjacent proteins. Interacts with kinesin light chain KLC1; this interaction leads to capsid disruption at the nuclear pore complex during virus entry into host cell.

The protein resides in the virion. Its subcellular location is the host nucleus. Its function is as follows. Structural component of the virion that acts as a cement protein on the capsid exterior and forms triskelion structures consisting of three molecules that stabilize three hexon trimers at the center of each icosahedral facet and fixes the peripentonal hexons. Dispensable for assembly. During virus entry, recruits the anterograde motor kinesin-1 to the capsid docked at the nuclear pore complex thereby subjecting the docked capsid to a pulling force. The resulting tension leads to capsid disruption, dispersion of capsid fragments toward cell periphery and eventually viral DNA entry into the host nucleus. The chain is Hexon-interlacing protein from Tupaiidae (tree shrews).